The sequence spans 98 residues: UPF0235 protein MJ0618 (98 aa).

The protein belongs to the UPF0235 family.

This is UPF0235 protein MJ0618 from Methanocaldococcus jannaschii (strain ATCC 43067 / DSM 2661 / JAL-1 / JCM 10045 / NBRC 100440) (Methanococcus jannaschii).